The sequence spans 348 residues: Phospho-2-dehydro-3-deoxyheptonate aldolase, Trp-sensitive (348 aa).

It belongs to the class-I DAHP synthase family.

The enzyme catalyses D-erythrose 4-phosphate + phosphoenolpyruvate + H2O = 7-phospho-2-dehydro-3-deoxy-D-arabino-heptonate + phosphate. It participates in metabolic intermediate biosynthesis; chorismate biosynthesis; chorismate from D-erythrose 4-phosphate and phosphoenolpyruvate: step 1/7. Functionally, stereospecific condensation of phosphoenolpyruvate (PEP) and D-erythrose-4-phosphate (E4P) giving rise to 3-deoxy-D-arabino-heptulosonate-7-phosphate (DAHP). The protein is Phospho-2-dehydro-3-deoxyheptonate aldolase, Trp-sensitive (aroH) of Buchnera aphidicola subsp. Baizongia pistaciae (strain Bp).